Reading from the N-terminus, the 152-residue chain is Transcriptional regulator MraZ (152 aa).

2 SpoVT-AbrB domains span residues 5–52 and 81–124; these read ATLV…PLPA and ASEC…DEQT.

The protein belongs to the MraZ family. Forms oligomers.

The protein resides in the cytoplasm. It is found in the nucleoid. In terms of biological role, negatively regulates its own expression and that of the subsequent genes in the proximal part of the division and cell wall (dcw) gene cluster. Acts by binding directly to DNA. May also regulate the expression of genes outside the dcw cluster. The chain is Transcriptional regulator MraZ from Sodalis glossinidius (strain morsitans).